A 524-amino-acid polypeptide reads, in one-letter code: Dihydromonacolin L monooxygenase mokC (524 aa).

The Cytoplasmic segment spans residues 1–25 (MTVPTDTVSRRLQSLAWSDIKQHAP). The chain crosses the membrane as a helical; Signal-anchor for type II membrane protein span at residues 26-47 (WLPSSRTLVSGFLCLILLQILY). Over 48–524 (SRGRKSDLRV…LMMRRRDEDL (477 aa)) the chain is Lumenal. Asparagine 396 and asparagine 401 each carry an N-linked (GlcNAc...) asparagine glycan. Heme is bound at residue cysteine 467.

It belongs to the cytochrome P450 family. It depends on heme as a cofactor.

The protein localises to the endoplasmic reticulum membrane. The catalysed reaction is dihydromonacolin L carboxylate + reduced [NADPH--hemoprotein reductase] + O2 = monacolin L carboxylate + oxidized [NADPH--hemoprotein reductase] + 2 H2O + H(+). It carries out the reaction monacolin L carboxylate + reduced [NADPH--hemoprotein reductase] + O2 = monacolin J carboxylate + oxidized [NADPH--hemoprotein reductase] + H2O + H(+). It functions in the pathway polyketide biosynthesis; lovastatin biosynthesis. In terms of biological role, cytochrome P450 monooxygenase; part of the gene cluster that mediates the biosynthesis of monakolin K, also known as lovastatin, and which acts as a potent competitive inhibitor of HMG-CoA reductase. Monakolin K biosynthesis is performed in two stages. The first stage is catalyzed by the nonaketide synthase mokA, which belongs to type I polyketide synthases and catalyzes the iterative nine-step formation of the polyketide. This PKS stage is completed by the action of dehydrogenase mokE, which catalyzes the NADPH-dependent reduction of the unsaturated tetra-, penta- and heptaketide intermediates that arise during the mokA-mediated biosynthesis of the nonaketide chain and leads to dihydromonacolin L. Covalently bound dihydromonacolin L is released from mokA by the mokD esterase. Conversion of dihydromonacolin L into monacolin L and then monacolin J is subsequently performed with the participation of molecular oxygen and P450 monoogygenase mokC. Finally, mokF performs the conversion of monacoline J to monacoline K through the addition of the side-chain diketide moiety (2R)-2-methylbutanoate produced by the diketide synthase mokB. This is Dihydromonacolin L monooxygenase mokC from Monascus pilosus (Red mold).